The chain runs to 265 residues: NAD kinase (265 aa).

D45 acts as the Proton acceptor in catalysis. NAD(+) contacts are provided by residues 45–46 (DG), 121–122 (NE), R147, D149, 160–165 (TAYSKS), A184, and Q222.

The protein belongs to the NAD kinase family. It depends on a divalent metal cation as a cofactor.

It localises to the cytoplasm. The catalysed reaction is NAD(+) + ATP = ADP + NADP(+) + H(+). Its function is as follows. Involved in the regulation of the intracellular balance of NAD and NADP, and is a key enzyme in the biosynthesis of NADP. Catalyzes specifically the phosphorylation on 2'-hydroxyl of the adenosine moiety of NAD to yield NADP. This Lacticaseibacillus paracasei (strain ATCC 334 / BCRC 17002 / CCUG 31169 / CIP 107868 / KCTC 3260 / NRRL B-441) (Lactobacillus paracasei) protein is NAD kinase.